We begin with the raw amino-acid sequence, 224 residues long: 7-cyano-7-deazaguanine synthase (224 aa).

9 to 19 (ISGGMDSTLCA) contributes to the ATP binding site. Residues C190, C198, C201, and C204 each coordinate Zn(2+).

Belongs to the QueC family. It depends on Zn(2+) as a cofactor.

The catalysed reaction is 7-carboxy-7-deazaguanine + NH4(+) + ATP = 7-cyano-7-deazaguanine + ADP + phosphate + H2O + H(+). Its pathway is purine metabolism; 7-cyano-7-deazaguanine biosynthesis. Its function is as follows. Catalyzes the ATP-dependent conversion of 7-carboxy-7-deazaguanine (CDG) to 7-cyano-7-deazaguanine (preQ(0)). This is 7-cyano-7-deazaguanine synthase from Campylobacter jejuni subsp. doylei (strain ATCC BAA-1458 / RM4099 / 269.97).